The primary structure comprises 269 residues: Adenosylcobinamide-GDP ribazoletransferase (269 aa).

The next 6 helical transmembrane spans lie at 63 to 83 (SAYY…LLYL), 87 to 107 (LPPG…TGML), 137 to 157 (VGAF…SLLG), 158 to 178 (AGLP…VVLM), 202 to 222 (LAFL…AALV), and 246 to 266 (VYGL…GWGF).

Belongs to the CobS family. The cofactor is Mg(2+).

Its subcellular location is the cell membrane. The catalysed reaction is alpha-ribazole + adenosylcob(III)inamide-GDP = adenosylcob(III)alamin + GMP + H(+). The enzyme catalyses alpha-ribazole 5'-phosphate + adenosylcob(III)inamide-GDP = adenosylcob(III)alamin 5'-phosphate + GMP + H(+). The protein operates within cofactor biosynthesis; adenosylcobalamin biosynthesis; adenosylcobalamin from cob(II)yrinate a,c-diamide: step 7/7. Its function is as follows. Joins adenosylcobinamide-GDP and alpha-ribazole to generate adenosylcobalamin (Ado-cobalamin). Also synthesizes adenosylcobalamin 5'-phosphate from adenosylcobinamide-GDP and alpha-ribazole 5'-phosphate. This Deinococcus radiodurans (strain ATCC 13939 / DSM 20539 / JCM 16871 / CCUG 27074 / LMG 4051 / NBRC 15346 / NCIMB 9279 / VKM B-1422 / R1) protein is Adenosylcobinamide-GDP ribazoletransferase.